Reading from the N-terminus, the 468-residue chain is Putative BTB/POZ domain and WD-repeat protein R154 (468 aa).

The BTB domain occupies 14–85 (SDLQLIVEDS…FYGIDDKLPE (72 aa)). WD repeat units follow at residues 194–233 (HHSE…IIFN), 354–398 (DEIG…LVKS), and 401–440 (LFDV…IIYT).

The protein belongs to the mimivirus BTB/WD family.

This chain is Putative BTB/POZ domain and WD-repeat protein R154, found in Acanthamoeba polyphaga (Amoeba).